The primary structure comprises 316 residues: Glycine--tRNA ligase alpha subunit (316 aa).

The protein belongs to the class-II aminoacyl-tRNA synthetase family. In terms of assembly, tetramer of two alpha and two beta subunits.

The protein resides in the cytoplasm. It catalyses the reaction tRNA(Gly) + glycine + ATP = glycyl-tRNA(Gly) + AMP + diphosphate. The polypeptide is Glycine--tRNA ligase alpha subunit (Cupriavidus taiwanensis (strain DSM 17343 / BCRC 17206 / CCUG 44338 / CIP 107171 / LMG 19424 / R1) (Ralstonia taiwanensis (strain LMG 19424))).